The sequence spans 183 residues: Ribosome-recycling factor (183 aa).

This sequence belongs to the RRF family.

The protein resides in the cytoplasm. Responsible for the release of ribosomes from messenger RNA at the termination of protein biosynthesis. May increase the efficiency of translation by recycling ribosomes from one round of translation to another. In Treponema pallidum (strain Nichols), this protein is Ribosome-recycling factor.